Here is a 350-residue protein sequence, read N- to C-terminus: 3-dehydroquinate synthase (350 aa).

NAD(+)-binding positions include 106-110 (GVVGD), 130-131 (TS), Lys-143, and Lys-152. Zn(2+) contacts are provided by Glu-185, His-246, and His-263.

Belongs to the sugar phosphate cyclases superfamily. Dehydroquinate synthase family. The cofactor is NAD(+). It depends on Co(2+) as a cofactor. Requires Zn(2+) as cofactor.

It localises to the cytoplasm. It carries out the reaction 7-phospho-2-dehydro-3-deoxy-D-arabino-heptonate = 3-dehydroquinate + phosphate. The protein operates within metabolic intermediate biosynthesis; chorismate biosynthesis; chorismate from D-erythrose 4-phosphate and phosphoenolpyruvate: step 2/7. Its function is as follows. Catalyzes the conversion of 3-deoxy-D-arabino-heptulosonate 7-phosphate (DAHP) to dehydroquinate (DHQ). In Clostridium perfringens (strain 13 / Type A), this protein is 3-dehydroquinate synthase.